The chain runs to 386 residues: MIRVRTSLKKCDVSLGLRLISTTRTNPTTPTTPRKRRATVFKDTLNKGPSFEDFVSGRAAEVSLDPLERARSTVEENQRLPKWLKTPIPKGSNFHKLKEDVRDLKLSTVCEEARCPNIGDCWGGNDKSKATATIMLLGDTCTRGCRFCSVKTNRKPGAPDPMEPENTAEAISRWGLGYVVLTTVDRDDLIDGGSHHLAETVRKIKQKAPNTLVETLAGDFRGDFQAVDVMAQSGLDVYAHNLETVESLTPHVRDRRATYRQSLNVLKRAKQTVPTLVTKTSLMLGLGETHEEVIQTLRDLREIKCDVVTFGQYMRPTKRHMKVVEYVTPEKFEFWKEQALEMGFLYCASGPLVRSSYKAGEAFIENVLRKRKPLEQQQESLSAFRI.

7 residues coordinate [4Fe-4S] cluster: Cys110, Cys115, Cys121, Cys141, Cys145, Cys148, and Ser356. The Radical SAM core domain maps to 124–345 (GNDKSKATAT…KEQALEMGFL (222 aa)).

It belongs to the radical SAM superfamily. Lipoyl synthase family. It depends on [4Fe-4S] cluster as a cofactor.

Its subcellular location is the mitochondrion. The enzyme catalyses [[Fe-S] cluster scaffold protein carrying a second [4Fe-4S](2+) cluster] + N(6)-octanoyl-L-lysyl-[protein] + 2 oxidized [2Fe-2S]-[ferredoxin] + 2 S-adenosyl-L-methionine + 4 H(+) = [[Fe-S] cluster scaffold protein] + N(6)-[(R)-dihydrolipoyl]-L-lysyl-[protein] + 4 Fe(3+) + 2 hydrogen sulfide + 2 5'-deoxyadenosine + 2 L-methionine + 2 reduced [2Fe-2S]-[ferredoxin]. It participates in protein modification; protein lipoylation via endogenous pathway; protein N(6)-(lipoyl)lysine from octanoyl-[acyl-carrier-protein]: step 2/2. In terms of biological role, catalyzes the radical-mediated insertion of two sulfur atoms into the C-6 and C-8 positions of the octanoyl moiety bound to the lipoyl domains of lipoate-dependent enzymes, thereby converting the octanoylated domains into lipoylated derivatives. This is Lipoyl synthase, mitochondrial from Zygosaccharomyces rouxii (strain ATCC 2623 / CBS 732 / NBRC 1130 / NCYC 568 / NRRL Y-229).